The sequence spans 166 residues: Endoribonuclease YbeY (166 aa).

Residues H132, H136, and H142 each coordinate Zn(2+).

The protein belongs to the endoribonuclease YbeY family. It depends on Zn(2+) as a cofactor.

It is found in the cytoplasm. Its function is as follows. Single strand-specific metallo-endoribonuclease involved in late-stage 70S ribosome quality control and in maturation of the 3' terminus of the 16S rRNA. This is Endoribonuclease YbeY from Clostridium acetobutylicum (strain ATCC 824 / DSM 792 / JCM 1419 / IAM 19013 / LMG 5710 / NBRC 13948 / NRRL B-527 / VKM B-1787 / 2291 / W).